Here is a 387-residue protein sequence, read N- to C-terminus: Phosphoglycerate kinase (387 aa).

Substrate contacts are provided by residues 21–23, Arg36, 59–62, Arg114, and Arg147; these read DLN and HLGR. ATP-binding positions include Lys198, Glu314, and 340-343; that span reads GGDT.

This sequence belongs to the phosphoglycerate kinase family. As to quaternary structure, monomer.

It is found in the cytoplasm. The enzyme catalyses (2R)-3-phosphoglycerate + ATP = (2R)-3-phospho-glyceroyl phosphate + ADP. It participates in carbohydrate degradation; glycolysis; pyruvate from D-glyceraldehyde 3-phosphate: step 2/5. In Erwinia tasmaniensis (strain DSM 17950 / CFBP 7177 / CIP 109463 / NCPPB 4357 / Et1/99), this protein is Phosphoglycerate kinase.